Reading from the N-terminus, the 1208-residue chain is DNA-directed RNA polymerase subunit beta (1208 aa).

Belongs to the RNA polymerase beta chain family. As to quaternary structure, the RNAP catalytic core consists of 2 alpha, 1 beta, 1 beta' and 1 omega subunit. When a sigma factor is associated with the core the holoenzyme is formed, which can initiate transcription.

The enzyme catalyses RNA(n) + a ribonucleoside 5'-triphosphate = RNA(n+1) + diphosphate. In terms of biological role, DNA-dependent RNA polymerase catalyzes the transcription of DNA into RNA using the four ribonucleoside triphosphates as substrates. The chain is DNA-directed RNA polymerase subunit beta from Enterococcus faecium (Streptococcus faecium).